Here is a 638-residue protein sequence, read N- to C-terminus: Dihydrolipoyllysine-residue acetyltransferase component of pyruvate dehydrogenase complex (638 aa).

2 Lipoyl-binding domains span residues 2-74 (SEII…IELE) and 117-191 (SQEV…LTLR). Lys-40 is subject to N6-lipoyllysine. Residues 90–117 (PAAPTQAVDEAEAPSPGASATPAPAAAS) are compositionally biased toward low complexity. The segment at 90-119 (PAAPTQAVDEAEAPSPGASATPAPAAASQE) is disordered. Lys-157 carries the N6-lipoyllysine modification. A disordered region spans residues 201–220 (APAAAAAASPAPAPLAPAAA). Positions 222–296 (PQEVKVPDIG…GTGDQILTLR (75 aa)) constitute a Lipoyl-binding 3 domain. Residue Lys-262 is modified to N6-lipoyllysine. Low complexity predominate over residues 301–320 (APSGPRARGSPGQAAAAPGA). Residues 301–336 (APSGPRARGSPGQAAAAPGAAPAPAPVGAPSRNGAK) are disordered. Positions 338–375 (HAGPAVRQLAREFGVELAAINSTGPRGRILKEDVQAYV) constitute a Peripheral subunit-binding (PSBD) domain. A catalytic region spans residues 382 to 638 (AKEAPAAGAA…LLADIRAILL (257 aa)). His-611 is a catalytic residue.

This sequence belongs to the 2-oxoacid dehydrogenase family. As to quaternary structure, forms a 24-polypeptide structural core with octahedral symmetry. (R)-lipoate serves as cofactor.

It catalyses the reaction N(6)-[(R)-dihydrolipoyl]-L-lysyl-[protein] + acetyl-CoA = N(6)-[(R)-S(8)-acetyldihydrolipoyl]-L-lysyl-[protein] + CoA. Its function is as follows. The pyruvate dehydrogenase complex catalyzes the overall conversion of pyruvate to acetyl-CoA and CO(2). It contains multiple copies of three enzymatic components: pyruvate dehydrogenase (E1), dihydrolipoamide acetyltransferase (E2) and lipoamide dehydrogenase (E3). The protein is Dihydrolipoyllysine-residue acetyltransferase component of pyruvate dehydrogenase complex of Azotobacter vinelandii.